Consider the following 101-residue polypeptide: Threonine-rich inner membrane protein GfcA (101 aa).

The N-terminal stretch at 1–21 is a signal peptide; that stretch reads MKHKLSAILMAFMLTTPAAFA. Residues 22–59 are Cytoplasmic-facing; sequence APEATNGTEATTGTTGTTTTTTGATTTATTTGGVAAGA. The segment at 24–45 is disordered; sequence EATNGTEATTGTTGTTTTTTGA. A helical membrane pass occupies residues 60-80; the sequence is VGTATVVGVATAVGVATLAVV. Residues 81–101 lie on the Periplasmic side of the membrane; that stretch reads AANDSGDGGSHNTSTTTSTTR. Positions 82-101 are disordered; it reads ANDSGDGGSHNTSTTTSTTR.

Its subcellular location is the cell inner membrane. The sequence is that of Threonine-rich inner membrane protein GfcA (gfcA) from Escherichia coli (strain K12).